The following is a 127-amino-acid chain: Protein ApaG (127 aa).

The ApaG domain occupies 3-127 (KTSIPDFQIT…FYLIAPLALH (125 aa)).

This is Protein ApaG from Bdellovibrio bacteriovorus (strain ATCC 15356 / DSM 50701 / NCIMB 9529 / HD100).